Reading from the N-terminus, the 209-residue chain is Eukaryotic translation initiation factor 4E (209 aa).

This sequence belongs to the eukaryotic initiation factor 4E family. As to quaternary structure, eIF4F is a multi-subunit complex, the composition of which varies with external and internal environmental conditions. It is composed of at least eIF4A, eIF4E and eIF4G. eIF4E is also known to interact with other partners.

Its function is as follows. Recognizes and binds the 7-methylguanosine-containing mRNA cap during an early step in the initiation of protein synthesis and facilitates ribosome binding by inducing the unwinding of the mRNAs secondary structures. This is Eukaryotic translation initiation factor 4E (TIF45) from Candida glabrata (strain ATCC 2001 / BCRC 20586 / JCM 3761 / NBRC 0622 / NRRL Y-65 / CBS 138) (Yeast).